We begin with the raw amino-acid sequence, 1216 residues long: 1-phosphatidylinositol 4,5-bisphosphate phosphodiesterase beta-1 (1216 aa).

Cysteine 17 carries the S-palmitoyl cysteine lipid modification. Serine 236 carries the post-translational modification Phosphoserine. The 152-residue stretch at 316–467 folds into the PI-PLC X-box domain; that stretch reads EDMSQPLSHY…LMYKILVKNK (152 aa). Catalysis depends on residues histidine 331 and histidine 378. Position 417 is a phosphoserine (serine 417). The interval 469-534 is disordered; sequence KSHKSSEGSG…MDEGTAGSEA (66 aa). The span at 472 to 483 shows a compositional bias: basic and acidic residues; it reads KSSEGSGKKKLS. The span at 491-501 shows a compositional bias: low complexity; sequence SDSSSVFEPSS. Residues 507–518 show a composition bias toward acidic residues; it reads ADTESDDDDDDD. Residue threonine 509 is modified to Phosphothreonine. Phosphoserine is present on residues serine 511 and serine 582. The PI-PLC Y-box domain occupies 540–656; it reads MSNLVNYIQP…GYRLKPEFMR (117 aa). One can recognise a C2 domain in the interval 656–784; that stretch reads RRPDKHFDPF…CLRNERNQPL (129 aa). Disordered stretches follow at residues 834-891, 933-993, 1071-1095, and 1172-1216; these read DEEE…VKAP, LVKR…IEQD, KMDKKRQEKITEAKSKDKSQMEEEK, and KISE…DTPL. A Phosphoserine; by PKC modification is found at serine 887. Basic and acidic residues-rich tracts occupy residues 941–951 and 959–979; these read TTDLIKEHTTK and YLRRRAALEKTAKKDNKKKSE. A phosphoserine mark is found at serine 978 and serine 987. The span at 980 to 991 shows a compositional bias: polar residues; sequence PSSPDHVSSTIE. Over residues 1075–1095 the composition is skewed to basic and acidic residues; sequence KRQEKITEAKSKDKSQMEEEK. Positions 1187–1198 are enriched in polar residues; it reads TSDSGKLNQKPP. 2 positions are modified to phosphoserine: serine 1199 and serine 1200. Residues 1207 to 1216 show a composition bias toward basic and acidic residues; that stretch reads NPGKEFDTPL.

In terms of assembly, interacts with DGKQ. Ca(2+) is required as a cofactor. Post-translationally, palmitoylated. Palmitoylation at Cys-17 by ZDHHC21 regulates the signaling activity of PLCB1 and the function of the endothelial barrier. Palmitoylation by ZDHHC21 is stimulated by inflammation.

It is found in the nucleus membrane. It localises to the cytoplasm. It catalyses the reaction a 1,2-diacyl-sn-glycero-3-phospho-(1D-myo-inositol-4,5-bisphosphate) + H2O = 1D-myo-inositol 1,4,5-trisphosphate + a 1,2-diacyl-sn-glycerol + H(+). It carries out the reaction a 1,2-diacyl-sn-glycero-3-phospho-(1D-myo-inositol) + H2O = 1D-myo-inositol 1-phosphate + a 1,2-diacyl-sn-glycerol + H(+). Its function is as follows. Catalyzes the hydrolysis of 1-phosphatidylinositol 4,5-bisphosphate into diacylglycerol (DAG) and inositol 1,4,5-trisphosphate (IP3) and mediates intracellular signaling downstream of G protein-coupled receptors. Regulates the function of the endothelial barrier. This is 1-phosphatidylinositol 4,5-bisphosphate phosphodiesterase beta-1 (PLCB1) from Bos taurus (Bovine).